Reading from the N-terminus, the 140-residue chain is 3-hydroxyacyl-[acyl-carrier-protein] dehydratase FabZ (140 aa).

Residue His-48 is part of the active site.

It belongs to the thioester dehydratase family. FabZ subfamily.

It localises to the cytoplasm. It carries out the reaction a (3R)-hydroxyacyl-[ACP] = a (2E)-enoyl-[ACP] + H2O. In terms of biological role, involved in unsaturated fatty acids biosynthesis. Catalyzes the dehydration of short chain beta-hydroxyacyl-ACPs and long chain saturated and unsaturated beta-hydroxyacyl-ACPs. The polypeptide is 3-hydroxyacyl-[acyl-carrier-protein] dehydratase FabZ (Halalkalibacterium halodurans (strain ATCC BAA-125 / DSM 18197 / FERM 7344 / JCM 9153 / C-125) (Bacillus halodurans)).